Consider the following 271-residue polypeptide: Phosphate import ATP-binding protein PstB 2 (271 aa).

Residues 25–266 (MATEDLHVYY…PQEKQTEDYI (242 aa)) form the ABC transporter domain. Residue 57–64 (GPSGCGKS) coordinates ATP.

Belongs to the ABC transporter superfamily. Phosphate importer (TC 3.A.1.7) family. In terms of assembly, the complex is composed of two ATP-binding proteins (PstB), two transmembrane proteins (PstC and PstA) and a solute-binding protein (PstS).

The protein resides in the cell membrane. It carries out the reaction phosphate(out) + ATP + H2O = ADP + 2 phosphate(in) + H(+). Functionally, part of the ABC transporter complex PstSACB involved in phosphate import. Responsible for energy coupling to the transport system. This chain is Phosphate import ATP-binding protein PstB 2, found in Listeria monocytogenes serovar 1/2a (strain ATCC BAA-679 / EGD-e).